The primary structure comprises 195 residues: Porimin (195 aa).

An N-terminal signal peptide occupies residues 1–23 (MALCARAALLLGVLQVLALLGAA). The Extracellular portion of the chain corresponds to 24–152 (QDPTDAQGSA…PTKGKGSKFD (129 aa)). 6 N-linked (GlcNAc...) asparagine glycosylation sites follow: N36, N45, N51, N59, N109, and N115. Positions 99-127 (VTPTASKSTPNASASPNSTHTSASMTTPA) are disordered. Positions 101 to 126 (PTASKSTPNASASPNSTHTSASMTTP) are enriched in polar residues. The helical transmembrane segment at 153-173 (AGSFVGGIVLTLGVLSILYIG) threads the bilayer. Residues 174-195 (CKMYYSRRGIRYRSIDEHDAII) lie on the Cytoplasmic side of the membrane. The residue at position 187 (S187) is a Phosphoserine.

The protein belongs to the CD164 family.

The protein localises to the membrane. Functionally, implicated in oncotic cell death, characterized by cell swelling, organelle swelling, vacuolization and increased membrane permeability. The sequence is that of Porimin (Tmem123) from Mus musculus (Mouse).